The sequence spans 175 residues: Adenine phosphoribosyltransferase (175 aa).

Belongs to the purine/pyrimidine phosphoribosyltransferase family. Homodimer.

It is found in the cytoplasm. It carries out the reaction AMP + diphosphate = 5-phospho-alpha-D-ribose 1-diphosphate + adenine. It participates in purine metabolism; AMP biosynthesis via salvage pathway; AMP from adenine: step 1/1. In terms of biological role, catalyzes a salvage reaction resulting in the formation of AMP, that is energically less costly than de novo synthesis. The polypeptide is Adenine phosphoribosyltransferase (Pelagibacter ubique (strain HTCC1062)).